Reading from the N-terminus, the 206-residue chain is Dihydrofolate reductase (206 aa).

The 199-residue stretch at 6 to 204 (SLTLIVALTT…FDYEFEMWTR (199 aa)) folds into the DHFR domain. Residues A12 and 18–24 (GIGRSNS) contribute to the NADP(+) site. 32-37 (EISYFK) lines the substrate pocket. 59–61 (RKT) provides a ligand contact to NADP(+). Position 75 (R75) interacts with substrate. NADP(+) is bound by residues 81 to 83 (TRN) and 124 to 131 (GGAQLYKA).

Belongs to the dihydrofolate reductase family.

The enzyme catalyses (6S)-5,6,7,8-tetrahydrofolate + NADP(+) = 7,8-dihydrofolate + NADPH + H(+). It participates in cofactor biosynthesis; tetrahydrofolate biosynthesis; 5,6,7,8-tetrahydrofolate from 7,8-dihydrofolate: step 1/1. Its function is as follows. Key enzyme in folate metabolism. Catalyzes an essential reaction for de novo glycine and purine synthesis, and for DNA precursor synthesis. In Pneumocystis carinii, this protein is Dihydrofolate reductase.